Here is a 229-residue protein sequence, read N- to C-terminus: ATP synthase subunit a 1 (229 aa).

The next 6 membrane-spanning stretches (helical) occupy residues 25-45 (ADAVAYTWLIMLLLLLFSFLA), 86-106 (VATVGLFVLVSNLIGLIPGFF), 111-131 (NINTTAACAIVVFIATHVVGI), 142-162 (FCGPILWLAPVMFFIEVIGHL), 181-201 (LVLIIFFGLAPFLVPLPMMLM), and 202-222 (GVLVSFIQAFVFMLLTMIYIQ).

The protein belongs to the ATPase A chain family. F-type ATPases have 2 components, CF(1) - the catalytic core - and CF(0) - the membrane proton channel. CF(1) has five subunits: alpha(3), beta(3), gamma(1), delta(1), epsilon(1). CF(0) has three main subunits: a(1), b(2) and c(9-12). The alpha and beta chains form an alternating ring which encloses part of the gamma chain. CF(1) is attached to CF(0) by a central stalk formed by the gamma and epsilon chains, while a peripheral stalk is formed by the delta and b chains.

It localises to the cell inner membrane. Key component of the proton channel; it plays a direct role in the translocation of protons across the membrane. The polypeptide is ATP synthase subunit a 1 (Pelobacter propionicus (strain DSM 2379 / NBRC 103807 / OttBd1)).